We begin with the raw amino-acid sequence, 230 residues long: Enolase-phosphatase E1 (230 aa).

This sequence belongs to the HAD-like hydrolase superfamily. MasA/MtnC family. In terms of assembly, monomer. Mg(2+) is required as a cofactor.

The enzyme catalyses 5-methylsulfanyl-2,3-dioxopentyl phosphate + H2O = 1,2-dihydroxy-5-(methylsulfanyl)pent-1-en-3-one + phosphate. The protein operates within amino-acid biosynthesis; L-methionine biosynthesis via salvage pathway; L-methionine from S-methyl-5-thio-alpha-D-ribose 1-phosphate: step 3/6. It functions in the pathway amino-acid biosynthesis; L-methionine biosynthesis via salvage pathway; L-methionine from S-methyl-5-thio-alpha-D-ribose 1-phosphate: step 4/6. Functionally, bifunctional enzyme that catalyzes the enolization of 2,3-diketo-5-methylthiopentyl-1-phosphate (DK-MTP-1-P) into the intermediate 2-hydroxy-3-keto-5-methylthiopentenyl-1-phosphate (HK-MTPenyl-1-P), which is then dephosphorylated to form the acireductone 1,2-dihydroxy-3-keto-5-methylthiopentene (DHK-MTPene). The chain is Enolase-phosphatase E1 from Marinobacter nauticus (strain ATCC 700491 / DSM 11845 / VT8) (Marinobacter aquaeolei).